A 280-amino-acid polypeptide reads, in one-letter code: MVYIHFPNNLTEEEQMLQAKYQKLKKKKKALQAHKAPKPEPESSLTLKRPTDARDAREVARKLIKSGAIPAIQKQTKQDQTSFKRPKGQERAKRSTSETTVASYQPFSSTQNDVAQETIISEIIKEEPRRQNLYQHFATERDREERGMPEKVPMDTAQPEKPRAGNTIFVSGNKVTEDFLKKTFNDYGTIVNVSMEIEKSRGFVSFAKPESADRAIAEIHGKNVNGINLQVQLARRQPQIEPINDASSSAVWSSIAASKSQKGSHKDHREMVQYDEDFLL.

The segment covering 25-36 (KKKKKALQAHKA) has biased composition (basic residues). Disordered stretches follow at residues 25 to 112 (KKKK…STQN) and 141 to 166 (RDRE…RAGN). Basic and acidic residues predominate over residues 49–61 (RPTDARDAREVAR). Residues 73-83 (QKQTKQDQTSF) show a composition bias toward polar residues. Residues 87-96 (KGQERAKRST) are compositionally biased toward basic and acidic residues. The segment covering 97 to 112 (SETTVASYQPFSSTQN) has biased composition (polar residues). The segment covering 141-163 (RDREERGMPEKVPMDTAQPEKPR) has biased composition (basic and acidic residues). An RRM domain is found at 166–236 (NTIFVSGNKV…INLQVQLARR (71 aa)).

It belongs to the RRM NELF-E family. Component of the NELF complex, which is at least composed of TH1/Nelf-D and Nelf-E.

It localises to the nucleus. The protein resides in the chromosome. Its function is as follows. Essential component of the NELF complex, a complex that negatively regulates the elongation of transcription by RNA polymerase II by RNA polymerase II. The NELF complex, which acts via an association with the DSIF complex, causes transcriptional pausing. The protein is Negative elongation factor E (Nelf-E) of Drosophila melanogaster (Fruit fly).